The chain runs to 401 residues: Tumor necrosis factor receptor superfamily member 11B (401 aa).

The signal sequence occupies residues 1 to 21 (MNNLLCCALVFLDISIKWTTQ). TNFR-Cys repeat units follow at residues 24–62 (FPPK…KTVC), 65–105 (CPDH…NRVC), 107–142 (CKEG…NTVC), and 145–185 (CPDG…DNIC). Disulfide bonds link Cys-41–Cys-54, Cys-44–Cys-62, Cys-65–Cys-80, Cys-83–Cys-97, Cys-87–Cys-105, Cys-107–Cys-118, Cys-124–Cys-142, and Cys-145–Cys-160. Asn-98 is a glycosylation site (N-linked (GlcNAc...) asparagine). 3 N-linked (GlcNAc...) asparagine glycosylation sites follow: Asn-152, Asn-165, and Asn-178. An intrachain disulfide couples Cys-166 to Cys-185. Death domains lie at 198 to 269 (DVTL…IVKK) and 270 to 365 (IIQD…TQSL). Asn-289 is a glycosylation site (N-linked (GlcNAc...) asparagine).

As to quaternary structure, homodimer. Interacts with TNFSF10 and TNFSF11. N-glycosylated. Contains sialic acid residues. In terms of processing, the N-terminus is blocked. As to expression, highly expressed in adult lung, heart, kidney, liver, spleen, thymus, prostate, ovary, small intestine, thyroid, lymph node, trachea, adrenal gland, testis, and bone marrow. Detected at very low levels in brain, placenta and skeletal muscle. Highly expressed in fetal kidney, liver and lung.

It localises to the secreted. Acts as a decoy receptor for TNFSF11/RANKL and thereby neutralizes its function in osteoclastogenesis. Inhibits the activation of osteoclasts and promotes osteoclast apoptosis in vitro. Bone homeostasis seems to depend on the local ratio between TNFSF11 and TNFRSF11B. May also play a role in preventing arterial calcification. May act as decoy receptor for TNFSF10/TRAIL and protect against apoptosis. TNFSF10/TRAIL binding blocks the inhibition of osteoclastogenesis. In Homo sapiens (Human), this protein is Tumor necrosis factor receptor superfamily member 11B (TNFRSF11B).